A 474-amino-acid polypeptide reads, in one-letter code: MAYIQLEPLNEGFLSRISDLLLCRWTCRHCCQKCYESSCCQSSEDEVEILGPFPAQTPPWLMASRSSDKDGDSVHTASEVPLTPRTNSPDGRRSSSDTSKSTYSLTRRISSLESRRPSSPLIDIKPIEFGVLSAKKEPIQPSVLRRTYTPDDYFRKFEPHLYSLDPNSDDVDSLTDEEILSKYQLGMLHFSTQYDLLHNHLTVRVIEARDLPPPISHDGSRQDMAHSNPYVKICLLPDQKNSKQTGVKRKTQKPVFEERYTFEIPFLEAQRRTLLLTVVDFDKFSRHCVIGKVSVPLCEVDLVKGGHWWKALIPSSQNEVELGELLLSLNYLPSAGRLNVDVIRAKQLLQTDVSQGSDPFVKIQLVHGLKLVKTKKTSFLRGTIDPFYNESFSFKVPQEELENASLVFTVFGHNMKSSNDFIGRIVIGQYSSGPSESNHWRRMLNTHRTAVEQWHSLRSRAECDRVSPASLEVT.

The segment at 60–112 (WLMASRSSDKDGDSVHTASEVPLTPRTNSPDGRRSSSDTSKSTYSLTRRISSL) is disordered. Over residues 96-112 (SDTSKSTYSLTRRISSL) the composition is skewed to low complexity. Phosphoserine occurs at positions 118 and 119. 2 C2 domains span residues 184-310 (QLGM…HWWK) and 321-455 (ELGE…EQWH).

It belongs to the synaptotagmin family.

It localises to the membrane. In terms of biological role, plays a role in dendrite formation by melanocytes. This is Synaptotagmin-17 (SYT17) from Pongo abelii (Sumatran orangutan).